The following is a 317-amino-acid chain: Carbonic anhydrase 5B, mitochondrial (317 aa).

Residues 1-33 (MTVMSHLRVSLQVSSCTLLWRRFRVPRLVPLRS) constitute a mitochondrion transit peptide. The 260-residue stretch at 37-296 (YTCTYRTRNR…LMNRTVRSSF (260 aa)) folds into the Alpha-carbonic anhydrase domain. Zn(2+)-binding residues include His130, His132, and His155. 235–236 (TT) contacts substrate.

The protein belongs to the alpha-carbonic anhydrase family. Zn(2+) is required as a cofactor.

It is found in the mitochondrion. The catalysed reaction is hydrogencarbonate + H(+) = CO2 + H2O. Mitochondrial carbonic anhydrase that catalyzes the reversible conversion of carbon dioxide to bicarbonate/HCO3. The polypeptide is Carbonic anhydrase 5B, mitochondrial (Ca5b) (Rattus norvegicus (Rat)).